A 911-amino-acid chain; its full sequence is DNA mismatch repair protein MutS (911 aa).

The segment covering methionine 1–aspartate 10 has biased composition (basic and acidic residues). The segment at methionine 1–glutamate 24 is disordered. Glycine 662–serine 669 lines the ATP pocket.

The protein belongs to the DNA mismatch repair MutS family.

Functionally, this protein is involved in the repair of mismatches in DNA. It is possible that it carries out the mismatch recognition step. This protein has a weak ATPase activity. The polypeptide is DNA mismatch repair protein MutS (Bartonella quintana (strain Toulouse) (Rochalimaea quintana)).